The chain runs to 259 residues: Probable dihydroorotate dehydrogenase B (NAD(+)), electron transfer subunit (259 aa).

An FAD-binding FR-type domain is found at 1–89; that stretch reads MLPLNATIVQ…RGPFGKGFSL (89 aa). Positions 211, 216, 219, and 229 each coordinate [2Fe-2S] cluster.

It belongs to the PyrK family. Heterotetramer of 2 PyrK and 2 PyrD type B subunits. It depends on [2Fe-2S] cluster as a cofactor. The cofactor is FAD.

The protein operates within pyrimidine metabolism; UMP biosynthesis via de novo pathway; orotate from (S)-dihydroorotate (NAD(+) route): step 1/1. Its function is as follows. Responsible for channeling the electrons from the oxidation of dihydroorotate from the FMN redox center in the PyrD type B subunit to the ultimate electron acceptor NAD(+). The chain is Probable dihydroorotate dehydrogenase B (NAD(+)), electron transfer subunit from Methanosarcina barkeri (strain Fusaro / DSM 804).